We begin with the raw amino-acid sequence, 215 residues long: Pyrrolidone-carboxylate peptidase (215 aa).

Residues glutamate 80, cysteine 143, and histidine 167 contribute to the active site.

This sequence belongs to the peptidase C15 family. Homotetramer.

The protein resides in the cytoplasm. The catalysed reaction is Release of an N-terminal pyroglutamyl group from a polypeptide, the second amino acid generally not being Pro.. Functionally, removes 5-oxoproline from various penultimate amino acid residues except L-proline. This chain is Pyrrolidone-carboxylate peptidase, found in Pectobacterium carotovorum subsp. carotovorum (strain PC1).